The chain runs to 408 residues: Cytochrome bc1 complex Rieske iron-sulfur subunit (408 aa).

A run of 3 helical transmembrane segments spans residues 56–76 (VTFW…TYIF), 98–118 (MLGI…VLYV), and 162–182 (LIMG…IAPM). A Rieske domain is found at 293 to 390 (HGPRNAVMLI…ITVDEEGYLI (98 aa)). Residues Cys-333, His-335, Cys-352, and His-355 each contribute to the [2Fe-2S] cluster site. Cys-338 and Cys-354 are joined by a disulfide.

The protein belongs to the Rieske iron-sulfur protein family. In terms of assembly, the cytochrome bc1 complex is composed of a cytochrome b (QcrB), the Rieske iron-sulfur protein (QcrA) and a diheme cytochrome c (QcrC) subunit. The bc1 complex forms a supercomplex with cytochrome c oxidase (cytochrome aa3). The cofactor is [2Fe-2S] cluster.

It is found in the cell membrane. Its function is as follows. Iron-sulfur subunit of the cytochrome bc1 complex, an essential component of the respiratory electron transport chain required for ATP synthesis. The bc1 complex catalyzes the oxidation of menaquinol and the reduction of cytochrome c in the respiratory chain. The bc1 complex operates through a Q-cycle mechanism that couples electron transfer to generation of the proton gradient that drives ATP synthesis. This chain is Cytochrome bc1 complex Rieske iron-sulfur subunit (qcrA), found in Corynebacterium glutamicum (strain ATCC 13032 / DSM 20300 / JCM 1318 / BCRC 11384 / CCUG 27702 / LMG 3730 / NBRC 12168 / NCIMB 10025 / NRRL B-2784 / 534).